A 477-amino-acid chain; its full sequence is Zinc finger C3HC-type protein 1-like (477 aa).

A C3HC-type zinc finger spans residues 95–149 (CAKYGWCNIECDMLKCSSCNAYLCASLQPILDFSKYKQRCVELQEALRKAHEKFC). Residues 287–392 (SLSAPGTPVS…SSSSDTSPRS (106 aa)) form a disordered region. Polar residues predominate over residues 354–363 (SMGQGENTGL). Residues 370 to 379 (SPHRRAKRPR) are compositionally biased toward basic residues. Residues 382-392 (SSSSSDTSPRS) are compositionally biased toward low complexity.

In terms of processing, phosphorylated. May also be weakly phosphorylated on Tyr residues.

The protein localises to the nucleus. It localises to the nucleus envelope. Functionally, required for proper positioning of a substantial amount of TPR at the nuclear basket (NB) through interaction with TPR. This chain is Zinc finger C3HC-type protein 1-like (zc3hc1), found in Xenopus laevis (African clawed frog).